The following is a 314-amino-acid chain: L-lactate dehydrogenase 2 (314 aa).

NAD(+) contacts are provided by residues Val16, Asp37, Lys42, Tyr68, and 82 to 83 (GL). Substrate is bound by residues Gln85, Arg91, and 123-126 (NPVD). NAD(+) contacts are provided by residues 121 to 123 (ATN) and Ser146. Residue 151 to 154 (DSAR) participates in substrate binding. Positions 156 and 171 each coordinate beta-D-fructose 1,6-bisphosphate. His178 serves as the catalytic Proton acceptor. Tyr223 is modified (phosphotyrosine). Substrate is bound at residue Thr232.

This sequence belongs to the LDH/MDH superfamily. LDH family. In terms of assembly, homotetramer.

It localises to the cytoplasm. The enzyme catalyses (S)-lactate + NAD(+) = pyruvate + NADH + H(+). It participates in fermentation; pyruvate fermentation to lactate; (S)-lactate from pyruvate: step 1/1. With respect to regulation, allosterically activated by fructose 1,6-bisphosphate (FBP). Its function is as follows. Catalyzes the conversion of lactate to pyruvate. The chain is L-lactate dehydrogenase 2 from Bacillus anthracis.